Here is a 38-residue protein sequence, read N- to C-terminus: 4 kDa defensin (38 aa).

Cystine bridges form between Cys-4–Cys-25, Cys-11–Cys-33, and Cys-15–Cys-35.

It belongs to the invertebrate defensin family. Type 2 subfamily.

It localises to the secreted. Dual-function peptide with antimicrobial and potassium channel-blocking activities. Shows inhibitory activity against Gram-positive bacteria such as M.luteus, S.aureus, B.subtilis, and M.luteus as well as methicillin-resistant S.aureus (MIC=0.1-20 uM). Does not act on bacteria by disrupting membranes. Also moderately inhibits Kv1.1/KCNA1, Kv1.2/KCNA2, and Kv1.3/KCNA3 potassium channels. Inhibits potassium channels by interacting with the pore region. Does not show hemolytic activity. The polypeptide is 4 kDa defensin (Leiurus hebraeus (Hebrew deathstalker scorpion)).